The chain runs to 349 residues: Fructose-1,6-bisphosphatase class 1 (349 aa).

The Mg(2+) site is built by Glu-91, Asp-110, Leu-112, and Asp-113. Residues 113–116 (DGSS) and Asn-205 contribute to the substrate site. Residue Glu-277 participates in Mg(2+) binding.

Belongs to the FBPase class 1 family. As to quaternary structure, homotetramer. Mg(2+) serves as cofactor.

It localises to the cytoplasm. The catalysed reaction is beta-D-fructose 1,6-bisphosphate + H2O = beta-D-fructose 6-phosphate + phosphate. It functions in the pathway carbohydrate biosynthesis; gluconeogenesis. This is Fructose-1,6-bisphosphatase class 1 from Rhizobium meliloti (strain 1021) (Ensifer meliloti).